An 876-amino-acid chain; its full sequence is Alanine--tRNA ligase (876 aa).

Residues His565, His569, Cys667, and His671 each coordinate Zn(2+).

It belongs to the class-II aminoacyl-tRNA synthetase family. Requires Zn(2+) as cofactor.

Its subcellular location is the cytoplasm. The enzyme catalyses tRNA(Ala) + L-alanine + ATP = L-alanyl-tRNA(Ala) + AMP + diphosphate. Catalyzes the attachment of alanine to tRNA(Ala) in a two-step reaction: alanine is first activated by ATP to form Ala-AMP and then transferred to the acceptor end of tRNA(Ala). Also edits incorrectly charged Ser-tRNA(Ala) and Gly-tRNA(Ala) via its editing domain. The polypeptide is Alanine--tRNA ligase (Staphylococcus aureus (strain Mu3 / ATCC 700698)).